The following is a 1004-amino-acid chain: Translation initiation factor IF-2 (1004 aa).

The interval 36–393 (SSTIEPPVVK…RQKRNEYESM (358 aa)) is disordered. Low complexity-rich tracts occupy residues 62–157 (AAKP…AKPA) and 173–183 (AAKPGAEAPRP). 2 stretches are compositionally biased toward pro residues: residues 184-196 (GGMP…PAPK) and 219-236 (PRPG…PGGG). Gly residues-rich tracts occupy residues 237-249 (PRPQ…GGQR) and 261-277 (GNRG…GPRP). Positions 279 to 303 (GGPRPQGGSRPQGGSAQGAQGAPSQ) are enriched in low complexity. The segment covering 330-373 (GKGGRGGQAGGGAGGGFNRGGGTGGGAGRGGRRGGTAGAFGRPG) has biased composition (gly residues). A compositionally biased stretch (basic residues) spans 377-386 (RRGRKSKRQK). One can recognise a tr-type G domain in the interval 499 to 671 (KRPPVVTVMG…VCLTADAELD (173 aa)). The tract at residues 508–515 (GHVDHGKT) is G1. A GTP-binding site is contributed by 508-515 (GHVDHGKT). Residues 533-537 (GITQG) are G2. The tract at residues 558–561 (DTPG) is G3. Residues 558 to 562 (DTPGH) and 612 to 615 (NKID) contribute to the GTP site. The interval 612–615 (NKID) is G4. Positions 648 to 650 (SAK) are G5.

The protein belongs to the TRAFAC class translation factor GTPase superfamily. Classic translation factor GTPase family. IF-2 subfamily.

Its subcellular location is the cytoplasm. One of the essential components for the initiation of protein synthesis. Protects formylmethionyl-tRNA from spontaneous hydrolysis and promotes its binding to the 30S ribosomal subunits. Also involved in the hydrolysis of GTP during the formation of the 70S ribosomal complex. The polypeptide is Translation initiation factor IF-2 (Corynebacterium glutamicum (strain ATCC 13032 / DSM 20300 / JCM 1318 / BCRC 11384 / CCUG 27702 / LMG 3730 / NBRC 12168 / NCIMB 10025 / NRRL B-2784 / 534)).